The sequence spans 409 residues: Type II methyltransferase M.BsuFI (409 aa).

Positions 101–402 (LTFIDLFAGI…GAMKERLLLA (302 aa)) constitute an SAM-dependent MTase C5-type domain. Cys-170 is an active-site residue.

The protein belongs to the class I-like SAM-binding methyltransferase superfamily. C5-methyltransferase family.

The enzyme catalyses a 2'-deoxycytidine in DNA + S-adenosyl-L-methionine = a 5-methyl-2'-deoxycytidine in DNA + S-adenosyl-L-homocysteine + H(+). A methylase, recognizes the double-stranded sequence 5'-CCGG-3', methylates C-1 on both strands, and protects the DNA from cleavage by the BsuFI endonuclease. This is Type II methyltransferase M.BsuFI (hsdFM) from Bacillus subtilis.